Here is a 152-residue protein sequence, read N- to C-terminus: UPF0178 protein KPN78578_03210 (152 aa).

The protein belongs to the UPF0178 family.

This is UPF0178 protein KPN78578_03210 from Klebsiella pneumoniae subsp. pneumoniae (strain ATCC 700721 / MGH 78578).